Here is a 385-residue protein sequence, read N- to C-terminus: Odorant receptor 82a (385 aa).

Topologically, residues 1–32 (MGRLFQLQEYCLRAMGHKDDMDSTDSTALSLK) are cytoplasmic. A helical transmembrane segment spans residues 33 to 53 (HISSLIFVISAQYPLISYVAY). Residues 54–62 (NRNDMEKVT) lie on the Extracellular side of the membrane. A helical membrane pass occupies residues 63–83 (ACLSVVFTNMLTVIKISTFLA). The Cytoplasmic segment spans residues 84 to 131 (NRKDFWEMIHRFRKMHEQSASHIPRYREGLDYVAEANKLASFLGRAYC). The helical transmembrane segment at 132-152 (VSCGLTGLYFMLGPIVKIGVC) threads the bilayer. Residues 153–186 (RWHGTTCDKELPMPMKFPFNDLESPGYEVCFLYT) are Extracellular-facing. The chain crosses the membrane as a helical span at residues 187–207 (VLVTVVVVAYASAVDGLFISF). Residues 208 to 257 (AINLRAHFQTLQRQIENWEFPSSEPDTQIRLKSIVEYHVLLLSLSRKLRS) are Cytoplasmic-facing. Residues 258–278 (IYTPTVMGQFVITSLQVGVII) traverse the membrane as a helical segment. Over 279 to 290 (YQLVTNMDSVMD) the chain is Extracellular. The chain crosses the membrane as a helical span at residues 291–311 (LLLYASFFGSIMLQLFIYCYG). Residues 312–357 (GEIIKAESLQVDTAVRLSNWHLASPKTRTSLSLIILQSQKEVLIRA) are Cytoplasmic-facing. The helical transmembrane segment at 358–378 (GFFVASLANFVGICRTALSLI) threads the bilayer. Residues 379-385 (TLIKSIE) are Extracellular-facing.

Belongs to the insect chemoreceptor superfamily. Heteromeric odorant receptor channel (TC 1.A.69) family. Or1a subfamily. Interacts with Orco. Complexes exist early in the endomembrane system in olfactory sensory neurons (OSNs), coupling these complexes to the conserved ciliary trafficking pathway. In terms of tissue distribution, expressed in olfactory sensory neurons in the antenna.

The protein resides in the cell membrane. Its function is as follows. Odorant receptor which mediates acceptance or avoidance behavior, depending on its substrates. The odorant receptor repertoire encodes a large collection of odor stimuli that vary widely in identity, intensity, and duration. May form a complex with Orco to form odorant-sensing units, providing sensitive and prolonged odorant signaling and calcium permeability. The chain is Odorant receptor 82a (Or82a) from Drosophila melanogaster (Fruit fly).